The chain runs to 701 residues: Polyphosphate kinase (701 aa).

Position 45 (N45) interacts with ATP. Mg(2+)-binding residues include R373 and R403. The PLD phosphodiesterase 1 domain occupies 428-462 (PGMKIHAKLLLITRKEGDEFVRYAHIGTGNFHERT). The active-site Phosphohistidine intermediate is H433. ATP-binding residues include Y466, R562, and H590. In terms of domain architecture, PLD phosphodiesterase 2 spans 585–615 (DRFLEHPRVLVVHNDGNPQVFISSADWMERN).

It belongs to the polyphosphate kinase 1 (PPK1) family. Mg(2+) is required as a cofactor. In terms of processing, an intermediate of this reaction is the autophosphorylated ppk in which a phosphate is covalently linked to a histidine residue through a N-P bond.

It catalyses the reaction [phosphate](n) + ATP = [phosphate](n+1) + ADP. In terms of biological role, catalyzes the reversible transfer of the terminal phosphate of ATP to form a long-chain polyphosphate (polyP). The protein is Polyphosphate kinase of Vibrio cholerae serotype O1 (strain ATCC 39315 / El Tor Inaba N16961).